The primary structure comprises 441 residues: Arginine biosynthesis bifunctional protein ArgJ, mitochondrial (441 aa).

Residues T177, K204, T215, E301, N436, and S441 each coordinate substrate. The active-site Nucleophile is T215.

Belongs to the ArgJ family. In terms of assembly, heterodimer of an alpha and a beta chain. In terms of processing, the alpha and beta chains are autoproteolytically processed from a single precursor protein within the mitochondrion.

The protein resides in the mitochondrion matrix. It carries out the reaction N(2)-acetyl-L-ornithine + L-glutamate = N-acetyl-L-glutamate + L-ornithine. The catalysed reaction is L-glutamate + acetyl-CoA = N-acetyl-L-glutamate + CoA + H(+). Its pathway is amino-acid biosynthesis; L-arginine biosynthesis; L-ornithine and N-acetyl-L-glutamate from L-glutamate and N(2)-acetyl-L-ornithine (cyclic): step 1/1. It functions in the pathway amino-acid biosynthesis; L-arginine biosynthesis; N(2)-acetyl-L-ornithine from L-glutamate: step 1/4. In terms of biological role, catalyzes two activities which are involved in the cyclic version of arginine biosynthesis: the synthesis of acetylglutamate from glutamate and acetyl-CoA, and of ornithine by transacetylation between acetylornithine and glutamate. This is Arginine biosynthesis bifunctional protein ArgJ, mitochondrial from Kluyveromyces lactis (strain ATCC 8585 / CBS 2359 / DSM 70799 / NBRC 1267 / NRRL Y-1140 / WM37) (Yeast).